The following is a 187-amino-acid chain: Frataxin, mitochondrial (187 aa).

It belongs to the frataxin family. In terms of assembly, monomer. Oligomer. Interacts with NIFS1.

Its subcellular location is the mitochondrion. It carries out the reaction 4 Fe(2+) + O2 + 4 H(+) = 4 Fe(3+) + 2 H2O. In terms of biological role, promotes the biosynthesis of heme as well as the assembly and repair of iron-sulfur clusters by delivering Fe(2+) to proteins involved in these pathways. May play a role in the protection against iron-catalyzed oxidative stress through its ability to catalyze the oxidation of Fe(2+) to Fe(3+). May be able to store large amounts of the metal in the form of a ferrihydrite mineral by oligomerization. Binds to the mitochondrial cysteine desulfurase NIFS1 and increases its activity. The sequence is that of Frataxin, mitochondrial (FH) from Arabidopsis thaliana (Mouse-ear cress).